Here is a 185-residue protein sequence, read N- to C-terminus: Orotate phosphoribosyltransferase (185 aa).

5-phospho-alpha-D-ribose 1-diphosphate contacts are provided by residues Arg-94, Lys-95, Lys-98, His-100, and 120–128 (EDVTTTGGS). The orotate site is built by Thr-124 and Arg-152.

Belongs to the purine/pyrimidine phosphoribosyltransferase family. PyrE subfamily. In terms of assembly, homodimer. Requires Mg(2+) as cofactor.

It carries out the reaction orotidine 5'-phosphate + diphosphate = orotate + 5-phospho-alpha-D-ribose 1-diphosphate. It participates in pyrimidine metabolism; UMP biosynthesis via de novo pathway; UMP from orotate: step 1/2. Functionally, catalyzes the transfer of a ribosyl phosphate group from 5-phosphoribose 1-diphosphate to orotate, leading to the formation of orotidine monophosphate (OMP). The sequence is that of Orotate phosphoribosyltransferase from Thermococcus kodakarensis (strain ATCC BAA-918 / JCM 12380 / KOD1) (Pyrococcus kodakaraensis (strain KOD1)).